A 718-amino-acid polypeptide reads, in one-letter code: MSRGYPENNNFLNNNNQMVLDMILYPLIGIPQTINWETVARLVPGLTPKECVKRFDELKSCGSSPVDNQYNPLMATGEGPVETLATYIKSSLLDTQGDFQETPVDQDTVSKAGRHSIATTRNCSSESENCTARNAGEETGESEGPNMVIHVCDEAKSLKEDFICPRDLLISEMKYFAEYLSMDAQRWEEVDISVHCDVHIFNWLIKYVKRNTKESKDCEIPALEPGNVISILISSEFLKMDSLVEQCIQYCHKNMNAIVAAPCNMNCINANLLTRIADLFTHNEIDDLKDKKDKFRSKLFCKKIERLFDPEYSNPDSRNNAATLYRCCLCKKLLTRETERRIPCIPGKINVDRHGNIIYIHIRDKTWDVHEYLNSLFEELKSWRDVYWRLWGTVNWLTCSRCYQAFLCIEFSHCQYHSEVVVYSSTVNSLNTVGTGIYPCCNQKVLRFDPTQLTKGCKVRDHMVVLHDQGENDDSPSCPPAKILDDLHKHKDVIAVPFLKDAVSDPGVGSCDEKGLEYEILLEPNTPWGSKTGELNAFLSLKNWTLQLKQQSLFSEEEEYTTGSEVTEDEVGDEEEIAKKQRKKEKPKKFTKPPKKQLSSPCSQKKEKTLEKSTSRDVSPFVVSMQKNKWDASRSLRFNQDAQREDDQRRMSEITGHLIKMRLGDLDRVKAKESKEFAGGIYSRLEAQVRASVPVTARQNSSDKNQRSKSRFGQGRPA.

An SANT domain is found at 21-59; that stretch reads DMILYPLIGIPQTINWETVARLVPGLTPKECVKRFDELK. In terms of domain architecture, BTB spans 147-255; that stretch reads MVIHVCDEAK…QCIQYCHKNM (109 aa). Residues 555–576 show a composition bias toward acidic residues; it reads SEEEEYTTGSEVTEDEVGDEEE. 2 disordered regions span residues 555–622 and 690–718; these read SEEE…SPFV and RASV…GRPA. Over residues 580–595 the composition is skewed to basic residues; sequence KQRKKEKPKKFTKPPK. The segment covering 604–615 has biased composition (basic and acidic residues); the sequence is QKKEKTLEKSTS.

This sequence belongs to the KIAA1841 family. In terms of assembly, homodimer. Interacts (via the BTB domain) with HDAC1 and NCOR2.

Negatively regulates class switch recombination or isotype switching in splenic B-cells. In Mus musculus (Mouse), this protein is SANT and BTB domain regulator of class switch recombination.